The primary structure comprises 857 residues: Bifunctional uridylyltransferase/uridylyl-removing enzyme (857 aa).

The interval 1-322 is uridylyltransferase; sequence MDTTPELLLC…FPSESMVTRE (322 aa). The tract at residues 323–679 is uridylyl-removing; the sequence is INDRFVERQG…ARISPAGEGL (357 aa). The 123-residue stretch at 441-563 folds into the HD domain; it reads VDQHILMVVR…VGNGRYLTAL (123 aa). 2 ACT domains span residues 680–760 and 788–857; these read QVAV…DPTQ and LLSV…ALAI.

Belongs to the GlnD family. Mg(2+) is required as a cofactor.

The enzyme catalyses [protein-PII]-L-tyrosine + UTP = [protein-PII]-uridylyl-L-tyrosine + diphosphate. It carries out the reaction [protein-PII]-uridylyl-L-tyrosine + H2O = [protein-PII]-L-tyrosine + UMP + H(+). With respect to regulation, uridylyltransferase (UTase) activity is inhibited by glutamine, while glutamine activates uridylyl-removing (UR) activity. Functionally, modifies, by uridylylation and deuridylylation, the PII regulatory proteins (GlnB and homologs), in response to the nitrogen status of the cell that GlnD senses through the glutamine level. Under low glutamine levels, catalyzes the conversion of the PII proteins and UTP to PII-UMP and PPi, while under higher glutamine levels, GlnD hydrolyzes PII-UMP to PII and UMP (deuridylylation). Thus, controls uridylylation state and activity of the PII proteins, and plays an important role in the regulation of nitrogen assimilation and metabolism. This Cupriavidus metallidurans (strain ATCC 43123 / DSM 2839 / NBRC 102507 / CH34) (Ralstonia metallidurans) protein is Bifunctional uridylyltransferase/uridylyl-removing enzyme.